A 716-amino-acid chain; its full sequence is MKDHDFDGDKGLAKGFLENFADANGRSKYMEILQEVSNRKIRAIQVDLDDLFNYKDESEEFLGRLTENTRRYVSIFSAAVDELLPEPTEAFPDDDHDILMTQRADDGTDNPDVSDPHQQIPSEIKRYYEVYFKAPSKGRPSTIREVKASHIGQLVRISGIVTRCSDVKPLMAVAVYTCEDCGHEIYQEVTSRVFMPLFKCPSSRCRLNSKAGNPILQLRASKFLKFQEAKMQELAEHVPKGHIPRSMTVHLRGELTRKVSPGDVVEFSGIFLPIPYTGFKALRAGLVADTYLEATSVTHFKKKYEEYEFQKDEEEQIARLAEDGDIYNKLSRSLAPEIYGHEDIKKALLLLLVGAPHRQLKDGMKIRGDVHICLMGDPGVAKSQLLKHIINVAPRGVYTTGKGSSGVGLTAAVMRDQVTNEMVLEGGALVLADMGICAIDEFDKMDESDRTAIHEVMEQQTVSIAKAGITTSLNARTAVLAAANPAWGRYDLRRTPAENINLPPALLSRFDLLWLILDRADMDSDLELAKHVLHVHQTEESPALGFEPLEPNILRAYISAARRLSPYVPAELEEYIATAYSSIRQEEAKSNTPHSYTTVRTLLSILRISAALARLRFSESVAQSDVDEALRLMQMSKISLYADDRQKAGLDAISDTYSIIRDEAARSKKTHVSYANALNWISRKGYSEAQLKECLEEYAALNVWQIDPHTFDIRFI.

The C4-type zinc finger occupies 178–205 (CEDCGHEIYQEVTSRVFMPLFKCPSSRC). One can recognise an MCM domain in the interval 326–531 (IYNKLSRSLA…MDSDLELAKH (206 aa)). An ATP-binding site is contributed by 376–383 (GDPGVAKS). An Arginine finger motif is present at residues 508-511 (SRFD).

Belongs to the MCM family. Component of the minichromosome maintenance (MCM) complex, a heterotetramer composed of MCM2, MCM3, MCM4, MCM5, MCM6 and MCM7. Interacts with ETG1. As to expression, expressed in shoot apex and flower buds.

Its subcellular location is the nucleus. It is found in the cytoplasm. It carries out the reaction ATP + H2O = ADP + phosphate + H(+). Probable component of the MCM2-7 complex (MCM complex) that may function as a DNA helicase and which is essential to undergo a single round of replication initiation and elongation per cell cycle in eukaryotic cells. Required for megagametophyte and embryo development. This is DNA replication licensing factor MCM7 (MCM7) from Arabidopsis thaliana (Mouse-ear cress).